A 264-amino-acid polypeptide reads, in one-letter code: B3-hordein (264 aa).

Low complexity predominate over residues 1–15 (QQPVSRQPQQIIPQQ). Positions 1–66 (QQPVSRQPQQ…QQPFPQQPPF (66 aa)) are disordered. 2 stretches are compositionally biased toward pro residues: residues 16-44 (PQQPFPLQPQQPQPFPQQPIPQQPQPYPQ) and 52-64 (QPFPSQQPFPQQP).

This sequence belongs to the gliadin/glutenin family. Developing endosperm.

In terms of biological role, sulfur-rich seed storage protein. In Hordeum vulgare (Barley), this protein is B3-hordein.